The primary structure comprises 441 residues: MKLANWCWLSSTVLATYGFLVVANNETEEIKDEAAQNACRVRLESRGRCEEEGECPYQVNLPPLTIQLPKQFSRIEEVFKEVQNLKEIVNSLKKTCQDCKLQADDSRDPGRNGLLLPGTGAPGETGDNRVRELEGEVNKLSSDLKNAKEEIDVLQGRLEKLNLVNMNNIEQYVDSKVANLTFVVNSLDGKCSSKCPRQEQIQSLPVQQHLIYKDCSEYYTIGKRSSELYRVTPEPRNSSFEVFCDMETMAGGWTVLQARVDGSTNFTRTWQDYKVGFGNLRREFWLGNDKIHLLTKSKDMILRIDLEDFNGIKLYALYDHFYVANEFLKYRLHIGNYNGTAGDALRFSKHYNHDLKFFTTPDRDNDRYPSGNCGLYYSSGWWFDACLSANLNGKYYHQKYRGVRNGIFWGTWPGISEAQPGGYKSSFKEVKMMIRPKHFKP.

An N-terminal signal peptide occupies residues 1-15; it reads MKLANWCWLSSTVLA. Asparagine 25 carries an N-linked (GlcNAc...) asparagine glycan. Residues 73-167 adopt a coiled-coil conformation; that stretch reads SRIEEVFKEV…LEKLNLVNMN (95 aa). The interval 102 to 128 is disordered; the sequence is QADDSRDPGRNGLLLPGTGAPGETGDN. N-linked (GlcNAc...) asparagine glycans are attached at residues asparagine 179, asparagine 237, asparagine 265, and asparagine 338. Residues 206–438 form the Fibrinogen C-terminal domain; the sequence is VQQHLIYKDC…EVKMMIRPKH (233 aa).

In terms of assembly, homotetramer; disulfide-linked.

It is found in the secreted. Its function is as follows. May play a role in physiologic lymphocyte functions at mucosal sites. In Bos taurus (Bovine), this protein is Fibroleukin (FGL2).